Consider the following 406-residue polypeptide: Tyrosine--tRNA ligase (406 aa).

Y35 serves as a coordination point for L-tyrosine. The 'HIGH' region motif lies at 40–49 (PTADSLHVGH). Residues Y168 and Q172 each coordinate L-tyrosine. The 'KMSKS' region signature appears at 228–232 (KMGKT). Position 231 (K231) interacts with ATP. One can recognise an S4 RNA-binding domain in the interval 340-404 (SELLDILVEA…RGKKNYNKIV (65 aa)).

It belongs to the class-I aminoacyl-tRNA synthetase family. TyrS type 1 subfamily. Homodimer.

It localises to the cytoplasm. The catalysed reaction is tRNA(Tyr) + L-tyrosine + ATP = L-tyrosyl-tRNA(Tyr) + AMP + diphosphate + H(+). In terms of biological role, catalyzes the attachment of tyrosine to tRNA(Tyr) in a two-step reaction: tyrosine is first activated by ATP to form Tyr-AMP and then transferred to the acceptor end of tRNA(Tyr). This is Tyrosine--tRNA ligase from Clostridium perfringens (strain ATCC 13124 / DSM 756 / JCM 1290 / NCIMB 6125 / NCTC 8237 / Type A).